The sequence spans 138 residues: Acidic phospholipase A2 Cvv-E6f (138 aa).

Positions 1 to 16 are cleaved as a signal peptide; it reads MRTLWIVAVLLLGVEG. Cystine bridges form between Cys-42/Cys-131, Cys-44/Cys-60, Cys-59/Cys-111, Cys-65/Cys-138, Cys-66/Cys-104, Cys-73/Cys-97, and Cys-91/Cys-102. Ca(2+) is bound by residues Tyr-43, Gly-45, and Gly-47. His-63 is a catalytic residue. Asp-64 lines the Ca(2+) pocket. Asp-105 is a catalytic residue.

The cofactor is Ca(2+). Expressed by the venom gland.

The protein localises to the secreted. It carries out the reaction a 1,2-diacyl-sn-glycero-3-phosphocholine + H2O = a 1-acyl-sn-glycero-3-phosphocholine + a fatty acid + H(+). In terms of biological role, snake venom phospholipase A2 (PLA2) that shows very low inhibition of ADP-induced platelet aggregation in platelet-rich plasma of human, rabbit and guinea pig. In vivo, shows efficient edema-inducing activities in rat paws. PLA2 catalyzes the calcium-dependent hydrolysis of the 2-acyl groups in 3-sn-phosphoglycerides. This Crotalus viridis viridis (Prairie rattlesnake) protein is Acidic phospholipase A2 Cvv-E6f.